Here is a 606-residue protein sequence, read N- to C-terminus: Threonine--tRNA ligase (606 aa).

The catalytic stretch occupies residues 212–503 (DHRKLGVEMK…LIEHTAGELP (292 aa)). 3 residues coordinate Zn(2+): cysteine 304, histidine 355, and histidine 480.

Belongs to the class-II aminoacyl-tRNA synthetase family. As to quaternary structure, homodimer. Requires Zn(2+) as cofactor.

It localises to the cytoplasm. It carries out the reaction tRNA(Thr) + L-threonine + ATP = L-threonyl-tRNA(Thr) + AMP + diphosphate + H(+). In terms of biological role, catalyzes the attachment of threonine to tRNA(Thr) in a two-step reaction: L-threonine is first activated by ATP to form Thr-AMP and then transferred to the acceptor end of tRNA(Thr). Also edits incorrectly charged L-seryl-tRNA(Thr). This chain is Threonine--tRNA ligase, found in Campylobacter curvus (strain 525.92).